Reading from the N-terminus, the 285-residue chain is Cell division protein DivIB (285 aa).

The span at 1 to 19 (MNEKNKNDESKHQEDKLQD) shows a compositional bias: basic and acidic residues. Residues 1-20 (MNEKNKNDESKHQEDKLQDQ) form a disordered region. At 1 to 66 (MNEKNKNDES…NRFNAMERNS (66 aa)) the chain is on the cytoplasmic side. A helical membrane pass occupies residues 67–87 (IHMIVILSIISLLLILLLSPL). The POTRA domain occupies 88 to 158 (MRFQKVEITG…QVAQIKIEEN (71 aa)). At 88–285 (MRFQKVEITG…FQVGTYFQQY (198 aa)) the chain is on the extracellular side.

It belongs to the FtsQ/DivIB family. DivIB subfamily.

It is found in the cell membrane. Functionally, cell division protein that may be involved in stabilizing or promoting the assembly of the division complex. This chain is Cell division protein DivIB, found in Weissella koreensis (strain KACC 15510).